The following is a 399-amino-acid chain: G2/mitotic-specific cyclin-B2 (399 aa).

The tract at residues 58–78 is disordered; that stretch reads PVKATKGPGKMTNTVVPPKPP.

It belongs to the cyclin family. Cyclin AB subfamily. In terms of assembly, interacts with the CDK1 protein kinase to form a serine/threonine kinase holoenzyme complex also known as maturation promoting factor (MPF). The cyclin subunit imparts substrate specificity to the complex.

In terms of biological role, essential for the control of the cell cycle at the G2/M (mitosis) transition. This chain is G2/mitotic-specific cyclin-B2 (CCNB2), found in Gallus gallus (Chicken).